The chain runs to 315 residues: Olfactory receptor 3A3 (315 aa).

Residues 1–28 (MESEAGTNRTAVAEFMLLGLVQTEEMQS) lie on the Extracellular side of the membrane. An N-linked (GlcNAc...) asparagine glycan is attached at Asn8. Residues 29-52 (VIFVLLLFAYLVTTGGNLSILAAI) form a helical membrane-spanning segment. Residues 53-60 (LVEPKLHT) lie on the Cytoplasmic side of the membrane. A helical transmembrane segment spans residues 61 to 82 (PMYFFLGNLSVLDVGCITVTVP). Residues 83–103 (AMLGRLLSHKSTISYDACLSQ) lie on the Extracellular side of the membrane. Residues Cys100 and Cys192 are joined by a disulfide bond. The helical transmembrane segment at 104–123 (LFFFHLLAGMDCFLLTAMAY) threads the bilayer. At 124–143 (DRFLAICRPLTYSTHMNQRV) the chain is on the cytoplasmic side. A helical transmembrane segment spans residues 144–161 (QRMLVAVSWTCAFTNALT). At 162-199 (HTIALTTLNFCGPSVINHFYCDLPQLFQLSCSSTQLNE) the chain is on the extracellular side. A helical membrane pass occupies residues 200-222 (LLLFVAAAVMAVAPLVFISVSYA). Residues 223–239 (HVVAAVLQIHSAEGRKK) lie on the Cytoplasmic side of the membrane. The chain crosses the membrane as a helical span at residues 240-262 (AFSTCGSHLTVVGIFYGTGVFSY). At 263–275 (MRLGSVESSDKDK) the chain is on the extracellular side. The chain crosses the membrane as a helical span at residues 276-295 (GVGVFMTVINPMLNPLIYSL). Residues 296–315 (RNTDVQGALCQLLVVKRSLT) lie on the Cytoplasmic side of the membrane.

The protein belongs to the G-protein coupled receptor 1 family.

The protein localises to the cell membrane. Its function is as follows. Odorant receptor. This is Olfactory receptor 3A3 (OR3A3) from Pan troglodytes (Chimpanzee).